The chain runs to 101 residues: Small ribosomal subunit protein uS14 (101 aa).

The tract at residues Pro-52–Gly-72 is disordered. Over residues Arg-59 to Gly-72 the composition is skewed to basic residues.

It belongs to the universal ribosomal protein uS14 family. In terms of assembly, part of the 30S ribosomal subunit. Contacts proteins S3 and S10.

Its function is as follows. Binds 16S rRNA, required for the assembly of 30S particles and may also be responsible for determining the conformation of the 16S rRNA at the A site. This is Small ribosomal subunit protein uS14 from Nitrosococcus oceani (strain ATCC 19707 / BCRC 17464 / JCM 30415 / NCIMB 11848 / C-107).